The primary structure comprises 84 residues: MNYLVMISFALLLMKGVESVRDAYIAKPENCVYECGITQDCNKLCTENGAESGYCQWGGKYGNACWCIKLPDSVPIRVPGKCQR.

An N-terminal signal peptide occupies residues 1–19 (MNYLVMISFALLLMKGVES). The LCN-type CS-alpha/beta domain occupies 21 to 83 (RDAYIAKPEN…VPIRVPGKCQ (63 aa)). Cystine bridges form between Cys-31–Cys-82, Cys-35–Cys-55, Cys-41–Cys-65, and Cys-45–Cys-67. A propeptide (removed by a carboxypeptidase) is located at residue Arg-84.

Expressed by the venom gland.

Its subcellular location is the secreted. Functionally, binds to voltage-dependent sodium channels (Nav) and voltage-dependent delayed rectifier potassium channels and inhibits the inactivation of the activated channels, thereby blocking neuronal transmission. Administration to mice at a dosage of 0.8 mg/kg produces an analgesic effect. The polypeptide is Neurotoxin BmK-M10 (Olivierus martensii (Manchurian scorpion)).